The chain runs to 549 residues: CDK5RAP3 protein homolog (549 aa).

3 short sequence motifs (shuffled ATG8-binding motif) span residues 274–277 (IDWD), 285–288 (IDWD), and 333–336 (ISWD).

Belongs to the CDK5RAP3 family. In terms of assembly, substrate adapter component of the UFM1 ribosome E3 ligase (UREL) complex. Interacts with ATG8 family proteins.

In terms of biological role, substrate adapter of E3 ligase complexes mediating ufmylation, the covalent attachment of the ubiquitin-like modifier UFM1 to substrate proteins, and which is involved in various processes, such as ribosome recycling and reticulophagy (also called ER-phagy). This Arabidopsis thaliana (Mouse-ear cress) protein is CDK5RAP3 protein homolog.